We begin with the raw amino-acid sequence, 214 residues long: Probable nicotinate-nucleotide adenylyltransferase (214 aa).

The protein belongs to the NadD family.

It catalyses the reaction nicotinate beta-D-ribonucleotide + ATP + H(+) = deamido-NAD(+) + diphosphate. Its pathway is cofactor biosynthesis; NAD(+) biosynthesis; deamido-NAD(+) from nicotinate D-ribonucleotide: step 1/1. Functionally, catalyzes the reversible adenylation of nicotinate mononucleotide (NaMN) to nicotinic acid adenine dinucleotide (NaAD). This Psychromonas ingrahamii (strain DSM 17664 / CCUG 51855 / 37) protein is Probable nicotinate-nucleotide adenylyltransferase.